The following is a 452-amino-acid chain: Pup--protein ligase (452 aa).

Residue glutamate 9 coordinates Mg(2+). Arginine 53 is an ATP binding site. Residue tyrosine 55 coordinates Mg(2+). The active-site Proton acceptor is aspartate 57. Residue glutamate 63 coordinates Mg(2+). The ATP site is built by threonine 66 and tryptophan 419.

This sequence belongs to the Pup ligase/Pup deamidase family. Pup-conjugating enzyme subfamily.

It carries out the reaction ATP + [prokaryotic ubiquitin-like protein]-L-glutamate + [protein]-L-lysine = ADP + phosphate + N(6)-([prokaryotic ubiquitin-like protein]-gamma-L-glutamyl)-[protein]-L-lysine.. It participates in protein degradation; proteasomal Pup-dependent pathway. The protein operates within protein modification; protein pupylation. In terms of biological role, catalyzes the covalent attachment of the prokaryotic ubiquitin-like protein modifier Pup to the proteasomal substrate proteins, thereby targeting them for proteasomal degradation. This tagging system is termed pupylation. The ligation reaction involves the side-chain carboxylate of the C-terminal glutamate of Pup and the side-chain amino group of a substrate lysine. This is Pup--protein ligase from Geodermatophilus obscurus (strain ATCC 25078 / DSM 43160 / JCM 3152 / CCUG 61914 / KCC A-0152 / KCTC 9177 / NBRC 13315 / NRRL B-3577 / G-20).